The following is a 545-amino-acid chain: Glucans biosynthesis protein G (545 aa).

An N-terminal signal peptide occupies residues 1 to 35; that stretch reads MIRVSSAVQRHAQKLIVLFSLLFGASLLMSDNGFA.

Belongs to the OpgD/OpgG family.

It localises to the periplasm. It functions in the pathway glycan metabolism; osmoregulated periplasmic glucan (OPG) biosynthesis. Functionally, involved in the biosynthesis of osmoregulated periplasmic glucans (OPGs). In Vibrio cholerae serotype O1 (strain ATCC 39541 / Classical Ogawa 395 / O395), this protein is Glucans biosynthesis protein G.